The following is a 533-amino-acid chain: Heterogeneous nuclear ribonucleoprotein Q (533 aa).

N-acetylalanine is present on alanine 2. Serine 69 bears the Phosphoserine mark. 3 consecutive RRM domains span residues 72–151 (TEIF…ISVA), 153–235 (NRLF…WADP), and 248–318 (KVLF…FAKP). A Glycyl lysine isopeptide (Lys-Gly) (interchain with G-Cter in SUMO2) cross-link involves residue lysine 78. N6-acetyllysine is present on lysine 131. An N6-acetyllysine modification is found at lysine 273. Tyrosine 283 bears the Phosphotyrosine mark. Positions 310-471 (NIEIVFAKPP…GARGGRGGNV (162 aa)) are interaction with APOBEC1. Arginine 354 bears the Asymmetric dimethylarginine; by PRMT1; alternate mark. Arginine 354 carries the omega-N-methylarginine; by PRMT1; alternate modification. 6 tandem repeats follow at residues 358–360 (RGG), 361–363 (RGG), 370–374 (YYGYE), 379–382 (YYGY), 388–390 (RGG), and 395–398 (YYGY). The segment at 358–469 (RGGRGGYGYP…VRGARGGRGG (112 aa)) is 8 X 3 AA repeats of R-G-G. A 3 X 4 AA repeats of Y-Y-G-Y region spans residues 370-398 (YYGYEDYYDYYGYDYHNYRGGYEDPYYGY). Arginine 406 carries the post-translational modification Omega-N-methylarginine; by PRMT1. Positions 407-533 (GRGGRGARGA…YQDTFGQQWK (127 aa)) are disordered. The stretch at 408-410 (RGG) is one 1-4 repeat. Residues 414–432 (RGAAPSRGRGAAPPRGRAG) are compositionally biased toward low complexity. Asymmetric dimethylarginine; by PRMT1 is present on arginine 420. Arginine 428 carries the asymmetric dimethylarginine; by PRMT1; alternate modification. An Omega-N-methylarginine; by PRMT1; alternate modification is found at arginine 428. An interaction with SMN region spans residues 428-459 (RGRAGYSQRGGPGSARGVRGARGGAQQQRGRG). An Asymmetric dimethylarginine; alternate modification is found at arginine 436. Arginine 436 carries the omega-N-methylarginine; alternate modification. One copy of the 1-5 repeat lies at 436-438 (RGG). Asymmetric dimethylarginine; by PRMT1; alternate is present on residues arginine 446 and arginine 449. Residues arginine 446 and arginine 449 each carry the omega-N-methylarginine; by PRMT1; alternate modification. A run of 3 repeats spans residues 449–451 (RGG), 464–466 (RGG), and 467–469 (RGG). Residues 460–472 (VRGARGGRGGNVG) show a composition bias toward gly residues. Residues 474-488 (KRKADGYNQPDSKRR) carry the Bipartite nuclear localization signal motif. The segment covering 490–505 (TNNQNWGSQPIAQQPL) has biased composition (polar residues). Serine 497 carries the phosphoserine modification. Lysine 517 is covalently cross-linked (Glycyl lysine isopeptide (Lys-Gly) (interchain with G-Cter in SUMO2)).

In terms of assembly, identified in a histone pre-mRNA complex, at least composed of ERI1, LSM11, SLBP, SNRPB, SYNCRIP and YBX1. Identified in the spliceosome C complex. Component of the coding region determinant (CRD)-mediated complex, composed of DHX9, HNRNPU, IGF2BP1, SYNCRIP and YBX1. Identified in a mRNP complex, at least composed of DHX9, DDX3X, ELAVL1, HNRNPU, IGF2BP1, ILF3, PABPC1, PCBP2, PTBP2, STAU1, STAU2, SYNCRIP and YBX1. Identified in a mRNP granule complex, at least composed of ACTB, ACTN4, DHX9, ERG, HNRNPA1, HNRNPA2B1, HNRNPAB, HNRNPD, HNRNPL, HNRNPR, HNRNPU, HSPA1, HSPA8, IGF2BP1, ILF2, ILF3, NCBP1, NCL, PABPC1, PABPC4, PABPN1, RPLP0, RPS3, RPS3A, RPS4X, RPS8, RPS9, SYNCRIP, YBX1 and untranslated mRNAs. Component of the APOB mRNA editosome. Interacts with APOBEC1 and A1CF. Part of a complex associated with the FOS mCRD domain and consisting of PABPC1, PAIP1, CSDE1/UNR, HNRPD and SYNCRIP. Interacts with HNRPR, SMN, POLR2A hyperphosphorylated C-terminal domain, minute virus of mice (MVM) NS1 protein and through its C-terminal domain with SYT7, SYT8 and SYT9. The non-phosphorylated and phosphorylated forms are colocalized with PAIP1 in polysomes. Interacts with GTPBP1. Interacts with HABP4. Post-translationally, phosphorylated on tyrosine. The membrane-bound form found in microsomes is phosphorylated in vitro by insulin receptor tyrosine kinase (INSR). Phosphorylation is inhibited upon binding to RNA, whereas the cytoplasmic form is poorly phosphorylated.

The protein localises to the nucleus. It is found in the nucleoplasm. It localises to the cytoplasm. The protein resides in the microsome. Functionally, heterogenous nuclear ribonucleoprotein (hnRNP) implicated in mRNA processing mechanisms. Component of the CRD-mediated complex that promotes MYC mRNA stability. Is associated in vitro with pre-mRNA, splicing intermediates and mature mRNA protein complexes. Binds to apoB mRNA AU-rich sequences. Part of the APOB mRNA editosome complex and may modulate the postranscriptional C to U RNA-editing of the APOB mRNA through either by binding to A1CF (APOBEC1 complementation factor), to APOBEC1 or to RNA itself. May be involved in translationally coupled mRNA turnover. Implicated with other RNA-binding proteins in the cytoplasmic deadenylation/translational and decay interplay of the FOS mRNA mediated by the major coding-region determinant of instability (mCRD) domain. Interacts in vitro preferentially with poly(A) and poly(U) RNA sequences. May be involved in cytoplasmic vesicle-based mRNA transport through interaction with synaptotagmins. This chain is Heterogeneous nuclear ribonucleoprotein Q (Syncrip), found in Rattus norvegicus (Rat).